Consider the following 92-residue polypeptide: MPRSLKKGPFIDVSLLKKVEKAVKINDKKPLKTWSRRSTVFPNMVGLTISVHNGRHHIPIFITEEMVGHKLGEFSLTRTYRGHTADKKVKKR.

This sequence belongs to the universal ribosomal protein uS19 family.

Its function is as follows. Protein S19 forms a complex with S13 that binds strongly to the 16S ribosomal RNA. The chain is Small ribosomal subunit protein uS19 from Buchnera aphidicola subsp. Schizaphis graminum (strain Sg).